We begin with the raw amino-acid sequence, 424 residues long: Riboflavin biosynthesis protein RibBA (424 aa).

The interval 1–206 (MFTCEAGIAS…VDDLITYRYT (206 aa)) is DHBP synthase. D-ribulose 5-phosphate contacts are provided by residues 32–33 (RE), Asp-37, 145–149 (RPGHT), and Glu-169. Glu-33 lines the Mg(2+) pocket. His-148 is a Mg(2+) binding site. A GTP cyclohydrolase II region spans residues 207-424 (YDSLVTKISS…YETVERMSCR (218 aa)). Position 257–261 (257–261 (RVHSE)) interacts with GTP. Residues Cys-262, Cys-273, and Cys-275 each contribute to the Zn(2+) site. GTP is bound by residues Gln-278, 301–303 (EGR), and Thr-323. Asp-335 functions as the Proton acceptor; for GTP cyclohydrolase activity in the catalytic mechanism. The active-site Nucleophile; for GTP cyclohydrolase activity is Arg-337. GTP-binding residues include Thr-358 and Lys-363.

In the N-terminal section; belongs to the DHBP synthase family. The protein in the C-terminal section; belongs to the GTP cyclohydrolase II family. The cofactor is Mg(2+). Mn(2+) serves as cofactor. It depends on Zn(2+) as a cofactor.

It catalyses the reaction D-ribulose 5-phosphate = (2S)-2-hydroxy-3-oxobutyl phosphate + formate + H(+). The catalysed reaction is GTP + 4 H2O = 2,5-diamino-6-hydroxy-4-(5-phosphoribosylamino)-pyrimidine + formate + 2 phosphate + 3 H(+). The protein operates within cofactor biosynthesis; riboflavin biosynthesis; 2-hydroxy-3-oxobutyl phosphate from D-ribulose 5-phosphate: step 1/1. It participates in cofactor biosynthesis; riboflavin biosynthesis; 5-amino-6-(D-ribitylamino)uracil from GTP: step 1/4. Its function is as follows. Catalyzes the conversion of D-ribulose 5-phosphate to formate and 3,4-dihydroxy-2-butanone 4-phosphate. In terms of biological role, catalyzes the conversion of GTP to 2,5-diamino-6-ribosylamino-4(3H)-pyrimidinone 5'-phosphate (DARP), formate and pyrophosphate. The sequence is that of Riboflavin biosynthesis protein RibBA from Chlamydia trachomatis serovar D (strain ATCC VR-885 / DSM 19411 / UW-3/Cx).